The following is a 470-amino-acid chain: Putative multidrug resistance protein MdtD (470 aa).

The Periplasmic portion of the chain corresponds to 1 to 11 (MTELPDNTRWQ). Residues 12 to 32 (LWIVAFGFFMQSLDTTIVNTA) form a helical membrane-spanning segment. Residues 33–48 (LPSMAKSLGESPLHMH) lie on the Cytoplasmic side of the membrane. A helical membrane pass occupies residues 49–69 (MVVVSYVLTVAVMLPASGWLA). The Periplasmic segment spans residues 70–76 (DKIGVRN). The chain crosses the membrane as a helical span at residues 77–97 (IFFAAIVLFTLGSLFCALSGT). Topologically, residues 98 to 101 (LNQL) are cytoplasmic. The helical transmembrane segment at 102-124 (VLARVLQGVGGAMMVPVGRLTVM) threads the bilayer. Over 125–137 (KIVPRAQYMAAMT) the chain is Periplasmic. Residues 138–158 (FVTLPGQIGPLLGPALGGVLV) form a helical membrane-spanning segment. The Cytoplasmic portion of the chain corresponds to 159–164 (EYASWH). The chain crosses the membrane as a helical span at residues 165 to 185 (WIFLINIPVGIVGAMATFMLM). Residues 186–196 (PNYIIETRRFD) lie on the Periplasmic side of the membrane. Residues 197–217 (LPGFLLLAIGMAVLTLALDGS) traverse the membrane as a helical segment. Residues 218 to 224 (KSMGISP) lie on the Cytoplasmic side of the membrane. The helical transmembrane segment at 225–245 (WTLAGLAAGGAAAILLYLFHA) threads the bilayer. Residues 246–262 (KKNSGALFSLRLFRTPT) lie on the Periplasmic side of the membrane. A helical transmembrane segment spans residues 263–283 (FSLGLLGSFAGRIGSGMLPFM). The Cytoplasmic segment spans residues 284–285 (TP). Residues 286–306 (VFLQIGLGFSPFHAGLMMIPM) form a helical membrane-spanning segment. Over 307-341 (VLGSMGMKRIVVQIVNRFGYRRVLVATTLGLALVS) the chain is Periplasmic. Residues 342-362 (LLFMSVALLGWYYLLPLVLLL) form a helical membrane-spanning segment. The Cytoplasmic portion of the chain corresponds to 363–395 (QGMVNSARFSSMNTLTLKDLPDTLASSGNSLLS). A helical membrane pass occupies residues 396–416 (MIMQLSMSIGVTIAGMLLGMF). Topologically, residues 417 to 430 (GQQHIGIDSSATHH) are periplasmic. A helical membrane pass occupies residues 431 to 451 (VFMYTWLCMAVIIALPAIIFA). Over 452 to 470 (RVPNDTQQNMVISRRKRSL) the chain is Cytoplasmic.

The protein belongs to the major facilitator superfamily. TCR/Tet family.

The protein localises to the cell inner membrane. This chain is Putative multidrug resistance protein MdtD, found in Salmonella typhimurium (strain LT2 / SGSC1412 / ATCC 700720).